A 117-amino-acid chain; its full sequence is Probable non-functional immunoglobulin heavy variable 3-16 (117 aa).

Residues methionine 1–cysteine 19 form the signal peptide. The tract at residues glutamate 20–serine 44 is framework-1. In terms of domain architecture, Ig-like spans valine 21–arginine 117. An intrachain disulfide couples cysteine 41 to cysteine 115. The tract at residues glycine 45–aspartate 52 is complementarity-determining-1. The segment at methionine 53–glycine 69 is framework-2. Residues valine 70–threonine 77 are complementarity-determining-2. Asparagine 73 carries N-linked (GlcNAc...) asparagine glycosylation. A framework-3 region spans residues histidine 78–cysteine 115. The tract at residues valine 116 to arginine 117 is complementarity-determining-3.

In terms of assembly, immunoglobulins are composed of two identical heavy chains and two identical light chains; disulfide-linked.

The protein resides in the secreted. The protein localises to the cell membrane. Probable non-functional open reading frame (ORF) of V region of the variable domain of immunoglobulin heavy chains. Non-functional ORF generally cannot participate in the synthesis of a productive immunoglobulin chain due to altered V-(D)-J or switch recombination and/or splicing site (at mRNA level) and/or conserved amino acid change (protein level). Immunoglobulins, also known as antibodies, are membrane-bound or secreted glycoproteins produced by B lymphocytes. In the recognition phase of humoral immunity, the membrane-bound immunoglobulins serve as receptors which, upon binding of a specific antigen, trigger the clonal expansion and differentiation of B lymphocytes into immunoglobulins-secreting plasma cells. Secreted immunoglobulins mediate the effector phase of humoral immunity, which results in the elimination of bound antigens. The antigen binding site is formed by the variable domain of one heavy chain, together with that of its associated light chain. Thus, each immunoglobulin has two antigen binding sites with remarkable affinity for a particular antigen. The variable domains are assembled by a process called V-(D)-J rearrangement and can then be subjected to somatic hypermutations which, after exposure to antigen and selection, allow affinity maturation for a particular antigen. This chain is Probable non-functional immunoglobulin heavy variable 3-16, found in Homo sapiens (Human).